The primary structure comprises 391 residues: Succinate--CoA ligase [ADP-forming] subunit beta (391 aa).

In terms of domain architecture, ATP-grasp spans Lys-9–Glu-245. ATP-binding positions include Lys-46, Gly-53 to Gly-55, Glu-99, Ala-102, and Glu-107. Mg(2+) is bound by residues Asn-200 and Asp-214. Residues Asn-265 and Gly-322–Val-324 contribute to the substrate site.

Belongs to the succinate/malate CoA ligase beta subunit family. Heterotetramer of two alpha and two beta subunits. Mg(2+) is required as a cofactor.

The enzyme catalyses succinate + ATP + CoA = succinyl-CoA + ADP + phosphate. The catalysed reaction is GTP + succinate + CoA = succinyl-CoA + GDP + phosphate. The protein operates within carbohydrate metabolism; tricarboxylic acid cycle; succinate from succinyl-CoA (ligase route): step 1/1. Functionally, succinyl-CoA synthetase functions in the citric acid cycle (TCA), coupling the hydrolysis of succinyl-CoA to the synthesis of either ATP or GTP and thus represents the only step of substrate-level phosphorylation in the TCA. The beta subunit provides nucleotide specificity of the enzyme and binds the substrate succinate, while the binding sites for coenzyme A and phosphate are found in the alpha subunit. In Sulfurimonas denitrificans (strain ATCC 33889 / DSM 1251) (Thiomicrospira denitrificans (strain ATCC 33889 / DSM 1251)), this protein is Succinate--CoA ligase [ADP-forming] subunit beta.